Here is a 223-residue protein sequence, read N- to C-terminus: Ribonuclease T (223 aa).

A compositionally biased stretch (acidic residues) spans 1-11 (MSDDHFDDEQE). The segment at 1 to 21 (MSDDHFDDEQEGSSGGPRHPM) is disordered. The region spanning 31 to 205 (VVVDVETGGF…YDTEKTAELF (175 aa)) is the Exonuclease domain. Mg(2+) is bound by residues aspartate 34, glutamate 36, histidine 192, and aspartate 197. Histidine 192 serves as the catalytic Proton donor/acceptor.

It belongs to the RNase T family. As to quaternary structure, homodimer. Mg(2+) is required as a cofactor.

In terms of biological role, trims short 3' overhangs of a variety of RNA species, leaving a one or two nucleotide 3' overhang. Responsible for the end-turnover of tRNA: specifically removes the terminal AMP residue from uncharged tRNA (tRNA-C-C-A). Also appears to be involved in tRNA biosynthesis. The sequence is that of Ribonuclease T from Pseudomonas fluorescens (strain ATCC BAA-477 / NRRL B-23932 / Pf-5).